Here is a 90-residue protein sequence, read N- to C-terminus: Co-chaperonin GroES (90 aa).

Belongs to the GroES chaperonin family. Heptamer of 7 subunits arranged in a ring. Interacts with the chaperonin GroEL.

The protein resides in the cytoplasm. Functionally, together with the chaperonin GroEL, plays an essential role in assisting protein folding. The GroEL-GroES system forms a nano-cage that allows encapsulation of the non-native substrate proteins and provides a physical environment optimized to promote and accelerate protein folding. GroES binds to the apical surface of the GroEL ring, thereby capping the opening of the GroEL channel. The protein is Co-chaperonin GroES of Borreliella afzelii (strain PKo) (Borrelia afzelii).